The chain runs to 585 residues: Arginine--tRNA ligase (585 aa).

The 'HIGH' region signature appears at Ala130–His140.

It belongs to the class-I aminoacyl-tRNA synthetase family. Monomer.

Its subcellular location is the cytoplasm. It carries out the reaction tRNA(Arg) + L-arginine + ATP = L-arginyl-tRNA(Arg) + AMP + diphosphate. This is Arginine--tRNA ligase from Methylorubrum extorquens (strain CM4 / NCIMB 13688) (Methylobacterium extorquens).